The following is a 201-amino-acid chain: Charged multivesicular body protein 6 (201 aa).

The N-myristoyl glycine moiety is linked to residue glycine 2. Positions glutamine 10 to alanine 145 form a coiled coil. The residue at position 119 (serine 119) is a Phosphoserine. Threonine 130 carries the phosphothreonine modification. A Type-2 MIT-interacting motif motif is present at residues isoleucine 168 to proline 179. The segment at proline 171–serine 201 is disordered. Positions leucine 178 to valine 188 are enriched in basic and acidic residues.

This sequence belongs to the SNF7 family. Probable core component of the endosomal sorting required for transport complex III (ESCRT-III). ESCRT-III components are thought to multimerize to form a flat lattice on the perimeter membrane of the endosome. Several assembly forms of ESCRT-III may exist that interact and act sequentially. Interacts with VPS4A; the interaction is direct. Interacts with VPS4B; the interaction is direct. Interacts with CHMP4A, CHMP4B and CHMP4C. Interacts with SNF8, VPS25 and VPS36. ISGylated in a CHMP5-dependent manner. Isgylation weakens its interaction with VPS4A.

Its subcellular location is the endomembrane system. The protein resides in the endosome membrane. It is found in the late endosome membrane. It localises to the membrane. Its function is as follows. Probable core component of the endosomal sorting required for transport complex III (ESCRT-III) which is involved in multivesicular bodies (MVBs) formation and sorting of endosomal cargo proteins into MVBs. MVBs contain intraluminal vesicles (ILVs) that are generated by invagination and scission from the limiting membrane of the endosome and mostly are delivered to lysosomes enabling degradation of membrane proteins, such as stimulated growth factor receptors, lysosomal enzymes and lipids. The MVB pathway appears to require the sequential function of ESCRT-O, -I,-II and -III complexes. ESCRT-III proteins mostly dissociate from the invaginating membrane before the ILV is released. The ESCRT machinery also functions in topologically equivalent membrane fission events, such as the terminal stages of cytokinesis and the budding of enveloped viruses (lentiviruses). ESCRT-III proteins are believed to mediate the necessary vesicle extrusion and/or membrane fission activities, possibly in conjunction with the AAA ATPase VPS4. In the ESCRT-III complex, it probably serves as an acceptor for the ESCRT-II complex on endosomal membrane. This Pongo abelii (Sumatran orangutan) protein is Charged multivesicular body protein 6 (CHMP6).